We begin with the raw amino-acid sequence, 31 residues long: Kallikrein-1 (31 aa).

One can recognise a Peptidase S1 domain in the interval 1 to 31 (VIGGQECARDSHPWQAAVYHFSDIECGGVLV).

Belongs to the peptidase S1 family. Kallikrein subfamily.

The enzyme catalyses Preferential cleavage of Arg-|-Xaa bonds in small molecule substrates. Highly selective action to release kallidin (lysyl-bradykinin) from kininogen involves hydrolysis of Met-|-Xaa or Leu-|-Xaa.. Its function is as follows. Glandular kallikreins cleave Met-Lys and Arg-Ser bonds in kininogen to release Lys-bradykinin. This is Kallikrein-1 from Cavia porcellus (Guinea pig).